Consider the following 1046-residue polypeptide: Piwi-like protein 2 (1046 aa).

Positions 1–12 (MDPKRPTFPSPP) are enriched in pro residues. Residues 1 to 35 (MDPKRPTFPSPPGVIRAPWQQSTEDQSQLLDQPSL) form a disordered region. Residues 19–31 (WQQSTEDQSQLLD) are compositionally biased toward polar residues. The region spanning 462 to 575 (SVLDVMNLIY…LLPELSFMTG (114 aa)) is the PAZ domain. The Piwi domain occupies 741 to 1032 (LVVCIMTGNR…LAFLSGQYLH (292 aa)). Residues Asp818, Glu856, Asp888, and His1021 contribute to the active site.

The protein belongs to the argonaute family. Piwi subfamily. As to quaternary structure, component of the PET complex. Mg(2+) is required as a cofactor. Methylated on arginine residues; required for the interaction with Tudor domain-containing protein and subsequent localization to the meiotic nuage, also named P granule. In terms of tissue distribution, detected in primordial germ cells (PGCs) from 3 dpf. In adult, it is found in both the female and male gonad. In the ovary, it is present in all stages of germ cell differentiation. In testis, it is present in mitotic and meiotic germ cells. No protein has been detected in the fully differentiated sperm cell.

It localises to the cytoplasm. The protein localises to the nucleus. In terms of biological role, endoribonuclease that plays a central role during spermatogenesis by repressing transposable elements and preventing their mobilization, which is essential for the germline integrity. Plays an essential role in germ cell differentiation and meiosis, independently of the function in transposable elements repression. Acts via the piRNA metabolic process, which mediates the repression of transposable elements during meiosis by forming complexes composed of piRNAs and Piwi proteins and govern the methylation and subsequent repression of transposons. During piRNA biosynthesis, plays a key role in the piRNA amplification loop, also named ping-pong amplification cycle, by acting as a 'slicer-competent' piRNA endoribonuclease that cleaves primary piRNAs, which are then loaded onto 'slicer-incompetent' piwil4. Piwil2 slicing produces a pre-miRNA intermediate, which is then processed in mature piRNAs, and as well as a 16 nucleotide by-product that is degraded. Required for piwil4/miwi2 nuclear localization and association with secondary piRNAs antisense. Represses circadian rhythms by promoting the stability and activity of core clock components BMAL1 and CLOCK. The sequence is that of Piwi-like protein 2 (piwil2) from Danio rerio (Zebrafish).